The primary structure comprises 1400 residues: Tiny macrocysts protein C (1400 aa).

The next 8 membrane-spanning stretches (helical) occupy residues 59 to 79 (ILTI…GFKQ), 112 to 132 (IFFW…WYVA), 152 to 172 (FVST…LIGL), 196 to 216 (ANLS…IVGF), 240 to 260 (FDVY…LVDF), 266 to 286 (SIVY…ILPY), 296 to 316 (SGFY…MGIN), and 320 to 340 (TATT…IGYF). Disordered regions lie at residues 367–393 (FNEI…SKVT) and 683–712 (ERSG…RGKY). Basic and acidic residues predominate over residues 369 to 386 (EITKNEKSKTGDSKEKES). A run of 4 helical transmembrane segments spans residues 726-746 (WLMI…LIVL), 975-995 (TMLY…AVLF), 1162-1182 (VLAI…TYSV), and 1342-1362 (VLTS…LLLF).

The protein resides in the membrane. The protein is Tiny macrocysts protein C (tmcC) of Dictyostelium discoideum (Social amoeba).